The chain runs to 373 residues: Probable tRNA sulfurtransferase (373 aa).

In terms of domain architecture, THUMP spans 54-158 (NKNIEELSKV…NDVAYFYHKI (105 aa)). ATP is bound by residues 176–177 (LF), 201–202 (NF), lysine 256, glycine 278, and glutamine 287.

Belongs to the ThiI family.

The protein localises to the cytoplasm. The catalysed reaction is [ThiI sulfur-carrier protein]-S-sulfanyl-L-cysteine + a uridine in tRNA + 2 reduced [2Fe-2S]-[ferredoxin] + ATP + H(+) = [ThiI sulfur-carrier protein]-L-cysteine + a 4-thiouridine in tRNA + 2 oxidized [2Fe-2S]-[ferredoxin] + AMP + diphosphate. The enzyme catalyses [ThiS sulfur-carrier protein]-C-terminal Gly-Gly-AMP + S-sulfanyl-L-cysteinyl-[cysteine desulfurase] + AH2 = [ThiS sulfur-carrier protein]-C-terminal-Gly-aminoethanethioate + L-cysteinyl-[cysteine desulfurase] + A + AMP + 2 H(+). Its pathway is cofactor biosynthesis; thiamine diphosphate biosynthesis. Its function is as follows. Catalyzes the ATP-dependent transfer of a sulfur to tRNA to produce 4-thiouridine in position 8 of tRNAs, which functions as a near-UV photosensor. Also catalyzes the transfer of sulfur to the sulfur carrier protein ThiS, forming ThiS-thiocarboxylate. This is a step in the synthesis of thiazole, in the thiamine biosynthesis pathway. The sulfur is donated as persulfide by IscS. This Saccharolobus islandicus (strain M.14.25 / Kamchatka #1) (Sulfolobus islandicus) protein is Probable tRNA sulfurtransferase.